A 482-amino-acid polypeptide reads, in one-letter code: C3a anaphylatoxin chemotactic receptor (482 aa).

The Extracellular segment spans residues 1 to 23 (MASFSAETNSTDLLSQPWNEPPV). N-linked (GlcNAc...) asparagine glycosylation is present at Asn-9. Residues 24–46 (ILSMVILSLTFLLGLPGNGLVLW) form a helical membrane-spanning segment. The Cytoplasmic portion of the chain corresponds to 47 to 57 (VAGLKMQRTVN). Residues 58–80 (TVWFLHLTLADLLCCLSLPFSLA) form a helical membrane-spanning segment. Residues 81 to 96 (HLALQGQWPYGRFLCE) lie on the Extracellular side of the membrane. Cys-95 and Cys-172 are oxidised to a cystine. A helical transmembrane segment spans residues 97–118 (LIPSIIVLNMFASVFLLTAISL). The Cytoplasmic segment spans residues 119-139 (DRCLVVFKPIWCQNHRNVGTA). The chain crosses the membrane as a helical span at residues 140-160 (CSICGCIWVVAFVMCIPVFVY). Residues 161–340 (REIFTADNHN…TPLVAITITR (180 aa)) are Extracellular-facing. A sulfotyrosine mark is found at Tyr-174 and Tyr-184. Asn-194 is a glycosylation site (N-linked (GlcNAc...) asparagine). Tyr-318 carries the post-translational modification Sulfotyrosine. Residues 341–360 (LVVGFLLPSVIMIACYSFIV) traverse the membrane as a helical segment. At 361-377 (FRMQRGRFAKSQSKTFR) the chain is on the cytoplasmic side. A helical transmembrane segment spans residues 378–400 (VAVVVVAVFLVCWTPYHIFGVLS). Residues 401–417 (LLIDPESPLGKTLMSWD) are Extracellular-facing. Residues 418-438 (HVSIALASANSCFNPFLYALL) form a helical membrane-spanning segment. Topologically, residues 439–482 (GKDFRKKARQSIQGILEAAFSEELTRSTHCNSNNVFSERNSTTV) are cytoplasmic. Residue Ser-459 is modified to Phosphoserine. Phosphothreonine is present on Thr-463.

Belongs to the G-protein coupled receptor 1 family. In terms of assembly, interacts with VGF-derived peptide TLQP-21. Post-translationally, among the sulfation sites Tyr-174 is essential for binding of C3a anaphylatoxin.

It is found in the cell membrane. Functionally, receptor for the chemotactic and inflammatory peptide anaphylatoxin C3a. This receptor stimulates chemotaxis, granule enzyme release and superoxide anion production. The protein is C3a anaphylatoxin chemotactic receptor (C3AR1) of Pongo abelii (Sumatran orangutan).